Reading from the N-terminus, the 147-residue chain is Large ribosomal subunit protein uL15 (147 aa).

Belongs to the universal ribosomal protein uL15 family. In terms of assembly, part of the 50S ribosomal subunit.

Binds to the 23S rRNA. In Blochmanniella floridana, this protein is Large ribosomal subunit protein uL15.